The following is a 326-amino-acid chain: Phospho-N-acetylmuramoyl-pentapeptide-transferase (326 aa).

Helical transmembrane passes span 3-23 (ISIS…PAFI), 51-71 (TMGG…VALF), 79-99 (VGMI…DDFL), 115-135 (LALQ…GGDM), 138-158 (IFGY…FWLV), 169-189 (GIDG…GVIA), 195-215 (MDIL…FVFN), 221-243 (VFMG…MALH), and 304-324 (VDFF…AILY).

It belongs to the glycosyltransferase 4 family. MraY subfamily. Mg(2+) is required as a cofactor.

The protein resides in the cell membrane. It catalyses the reaction UDP-N-acetyl-alpha-D-muramoyl-L-alanyl-gamma-D-glutamyl-L-lysyl-D-alanyl-D-alanine + di-trans,octa-cis-undecaprenyl phosphate = Mur2Ac(oyl-L-Ala-gamma-D-Glu-L-Lys-D-Ala-D-Ala)-di-trans,octa-cis-undecaprenyl diphosphate + UMP. Its pathway is cell wall biogenesis; peptidoglycan biosynthesis. Its function is as follows. Catalyzes the initial step of the lipid cycle reactions in the biosynthesis of the cell wall peptidoglycan: transfers peptidoglycan precursor phospho-MurNAc-pentapeptide from UDP-MurNAc-pentapeptide onto the lipid carrier undecaprenyl phosphate, yielding undecaprenyl-pyrophosphoryl-MurNAc-pentapeptide, known as lipid I. The polypeptide is Phospho-N-acetylmuramoyl-pentapeptide-transferase (Streptococcus pneumoniae (strain Hungary19A-6)).